The following is a 37-amino-acid chain: Large ribosomal subunit protein bL36c (37 aa).

Belongs to the bacterial ribosomal protein bL36 family.

The protein resides in the plastid. Its subcellular location is the chloroplast. The protein is Large ribosomal subunit protein bL36c of Mesembryanthemum crystallinum (Common ice plant).